The primary structure comprises 538 residues: uncharacterized protein (538 aa).

A signal peptide spans 1-17 (MNLQILLLLLLFCHVAA). Asn-115 carries N-linked (GlcNAc...) asparagine glycosylation.

This is an uncharacterized protein from Caenorhabditis elegans.